The chain runs to 79 residues: MLILSRKQDDSVIIGDDIEIKIISIDKGSVRLGFSAPENCVILRGELKEAITSQNKQASQSDDIKAVSEIKFLLKAHKK.

Belongs to the CsrA/RsmA family. In terms of assembly, homodimer; the beta-strands of each monomer intercalate to form a hydrophobic core, while the alpha-helices form wings that extend away from the core.

The protein resides in the cytoplasm. In terms of biological role, a translational regulator that binds mRNA to regulate translation initiation and/or mRNA stability. Usually binds in the 5'-UTR at or near the Shine-Dalgarno sequence preventing ribosome-binding, thus repressing translation. Its main target seems to be the major flagellin gene, while its function is anatagonized by FliW. The chain is Translational regulator CsrA from Helicobacter hepaticus (strain ATCC 51449 / 3B1).